A 665-amino-acid chain; its full sequence is Probable potassium transport system protein Kup (665 aa).

12 helical membrane passes run Ser15–Met35, Ile48–Thr68, Trp100–Pro120, Ile147–Thr167, Ile173–Leu193, Leu219–Ser239, Leu251–Ile271, Met292–Ala312, Ile348–Phe368, Tyr378–Leu398, Pro403–Ile423, and Lys431–Ile451.

Belongs to the HAK/KUP transporter (TC 2.A.72) family.

It localises to the cell membrane. It carries out the reaction K(+)(in) + H(+)(in) = K(+)(out) + H(+)(out). In terms of biological role, transport of potassium into the cell. Likely operates as a K(+):H(+) symporter. In Clostridium perfringens (strain ATCC 13124 / DSM 756 / JCM 1290 / NCIMB 6125 / NCTC 8237 / Type A), this protein is Probable potassium transport system protein Kup.